Here is a 56-residue protein sequence, read N- to C-terminus: Ovomucoid (56 aa).

One can recognise a Kazal-like domain in the interval 6-56; the sequence is VDCSEYPKPACTLEHRPLCGSDNKTYGNKCNFCNAVVESNGTLTLSHFGKC. Cystine bridges form between Cys-8–Cys-38, Cys-16–Cys-35, and Cys-24–Cys-56. Asn-45 carries N-linked (GlcNAc...) asparagine glycosylation.

It localises to the secreted. The protein is Ovomucoid of Pavo cristatus (Indian peafowl).